A 279-amino-acid polypeptide reads, in one-letter code: Energy-coupling factor transporter ATP-binding protein EcfA2 (279 aa).

The ABC transporter domain occupies 3–245 (ITLKNVSYTY…LDFMESIQLG (243 aa)). 40 to 47 (GHTGSGKS) is an ATP binding site.

It belongs to the ABC transporter superfamily. Energy-coupling factor EcfA family. In terms of assembly, forms a stable energy-coupling factor (ECF) transporter complex composed of 2 membrane-embedded substrate-binding proteins (S component), 2 ATP-binding proteins (A component) and 2 transmembrane proteins (T component).

Its subcellular location is the cell membrane. Functionally, ATP-binding (A) component of a common energy-coupling factor (ECF) ABC-transporter complex. Unlike classic ABC transporters this ECF transporter provides the energy necessary to transport a number of different substrates. This Streptococcus sanguinis (strain SK36) protein is Energy-coupling factor transporter ATP-binding protein EcfA2.